The chain runs to 885 residues: Leucine--tRNA ligase (885 aa).

The short motif at 48-58 (PYPSGKLHMGH) is the 'HIGH' region element. The short motif at 639-643 (TMSKS) is the 'KMSKS' region element. Lys642 lines the ATP pocket.

Belongs to the class-I aminoacyl-tRNA synthetase family.

The protein resides in the cytoplasm. The enzyme catalyses tRNA(Leu) + L-leucine + ATP = L-leucyl-tRNA(Leu) + AMP + diphosphate. The chain is Leucine--tRNA ligase from Bordetella petrii (strain ATCC BAA-461 / DSM 12804 / CCUG 43448).